Here is a 210-residue protein sequence, read N- to C-terminus: MKKEIASHLLEIGAVFLQPNDPFTWSSGMKSPIYCDNRLTLSYPKVRQAIAAGLEELIKEHFPTVEVIAGTATAGIAHAAWVSDRMDLPMCYVRSKAKGHGKGNQIEGKAEKGQKVVVVEDLISTGGSAITCVEALREAGCEVLGIVSIFTYELEAGKEKLEAANVVSYSLSDYSALTEVAAEKGMIGQAEMKKLQEWRKNPANEAWITA.

5-phospho-alpha-D-ribose 1-diphosphate is bound by residues Arg94, Lys98, His100, and 120-128; that span reads EDLISTGGS. Ser124 lines the orotate pocket.

The protein belongs to the purine/pyrimidine phosphoribosyltransferase family. PyrE subfamily. As to quaternary structure, homodimer. Requires Mg(2+) as cofactor.

The enzyme catalyses orotidine 5'-phosphate + diphosphate = orotate + 5-phospho-alpha-D-ribose 1-diphosphate. The protein operates within pyrimidine metabolism; UMP biosynthesis via de novo pathway; UMP from orotate: step 1/2. Catalyzes the transfer of a ribosyl phosphate group from 5-phosphoribose 1-diphosphate to orotate, leading to the formation of orotidine monophosphate (OMP). The sequence is that of Orotate phosphoribosyltransferase from Bacillus cereus (strain B4264).